Consider the following 456-residue polypeptide: Membrane-bound lytic murein transglycosylase F (456 aa).

Positions 1 to 22 are cleaved as a signal peptide; sequence MKTWPSRAVSLLLLALALPVGC. Residues 23-267 form a non-LT domain region; sequence SEPPPPVRDP…ALDETWFGRF (245 aa). The segment at 268-456 is LT domain; it reads GDYDYVDVAR…YRALLAAQDL (189 aa). Glu314 is a catalytic residue.

It in the N-terminal section; belongs to the bacterial solute-binding protein 3 family. The protein in the C-terminal section; belongs to the transglycosylase Slt family.

The protein localises to the cell outer membrane. It catalyses the reaction Exolytic cleavage of the (1-&gt;4)-beta-glycosidic linkage between N-acetylmuramic acid (MurNAc) and N-acetylglucosamine (GlcNAc) residues in peptidoglycan, from either the reducing or the non-reducing ends of the peptidoglycan chains, with concomitant formation of a 1,6-anhydrobond in the MurNAc residue.. Its function is as follows. Murein-degrading enzyme that degrades murein glycan strands and insoluble, high-molecular weight murein sacculi, with the concomitant formation of a 1,6-anhydromuramoyl product. Lytic transglycosylases (LTs) play an integral role in the metabolism of the peptidoglycan (PG) sacculus. Their lytic action creates space within the PG sacculus to allow for its expansion as well as for the insertion of various structures such as secretion systems and flagella. In Maricaulis maris (strain MCS10) (Caulobacter maris), this protein is Membrane-bound lytic murein transglycosylase F.